Reading from the N-terminus, the 216-residue chain is uncharacterized protein (216 aa).

6 helical membrane passes run 12-32 (YVLG…FVLA), 48-68 (GVFL…ASLL), 74-94 (LFIG…VGML), 134-154 (ILFF…YPGL), 156-176 (FLVL…FLIF), and 191-211 (LAAG…VKLA).

Belongs to the Rht family.

Its subcellular location is the cell membrane. This is an uncharacterized protein from Pseudomonas aeruginosa (strain ATCC 15692 / DSM 22644 / CIP 104116 / JCM 14847 / LMG 12228 / 1C / PRS 101 / PAO1).